Consider the following 592-residue polypeptide: Arginine--tRNA ligase (592 aa).

The short motif at 128–138 is the 'HIGH' region element; that stretch reads ANPTGPLHVGH.

The protein belongs to the class-I aminoacyl-tRNA synthetase family. As to quaternary structure, monomer.

It localises to the cytoplasm. It catalyses the reaction tRNA(Arg) + L-arginine + ATP = L-arginyl-tRNA(Arg) + AMP + diphosphate. This is Arginine--tRNA ligase from Hydrogenovibrio crunogenus (strain DSM 25203 / XCL-2) (Thiomicrospira crunogena).